Here is a 403-residue protein sequence, read N- to C-terminus: tRNA pseudouridine synthase D (403 aa).

Residues 1–10 (MTVQVQDHDI) are compositionally biased toward basic and acidic residues. Positions 1 to 24 (MTVQVQDHDITTAADTAKLPQPMQ) are disordered. Asp92 acts as the Nucleophile in catalysis. The 163-residue stretch at 192–354 (GVPNYFGPQR…IKAQRRALRL (163 aa)) folds into the TRUD domain. A disordered region spans residues 217–240 (ARPVPESRPQPNKGKRKRVPREQN).

It belongs to the pseudouridine synthase TruD family.

The catalysed reaction is uridine(13) in tRNA = pseudouridine(13) in tRNA. Functionally, responsible for synthesis of pseudouridine from uracil-13 in transfer RNAs. The protein is tRNA pseudouridine synthase D of Psychrobacter arcticus (strain DSM 17307 / VKM B-2377 / 273-4).